The following is a 579-amino-acid chain: MEESHFNSNPYFWPSIPTVSGQIENTMFINKMKDQLLPEKGCGLAPPHYPTLLTVPASVSLSSGISMDTESKSEQLTPHSQASVTQNITVVPVPSTGLMTAGVSCSQRWRREGSQSRGPGLVITSPSGSLVTTASSAQTFPISTPMIVSALPPGSQALQVVPDLSKKVASTLTEEGGGGGGGGGTVAPPKPPRGRKKKRMLESGLPEMNDPYVLAPGDDDDHQKDGKTYRCRMCSLTFYSKSEMQIHSKSHTETKPHKCPHCSKTFANSSYLAQHIRIHSGAKPYSCNFCEKSFRQLSHLQQHTRIHSKMHTETIKPHKCPHCSKTFANTSYLAQHLRIHSGAKPYNCSYCQKAFRQLSHLQQHTRIHTGDRPYKCAHPGCEKAFTQLSNLQSHRRQHNKDKPFKCHNCHRAYTDAASLEAHLSTHTVKHAKVYTCTICSRAYTSETYLMKHMRKHNPPDLQQQVQAAAAAAAVAQAQAQAQAQAQAQAQAQAQAQAQAQAQASQASQQQQQQQPPPPQPPHFQSPGAAPQGGGGGDSNQNPPPQCSFDLTPYKPAEHHKDICLTVTTSTIQVEHLASS.

Positions 171-198 (TLTEEGGGGGGGGGTVAPPKPPRGRKKK) are disordered. The segment covering 175–185 (EGGGGGGGGGT) has biased composition (gly residues). 8 consecutive C2H2-type zinc fingers follow at residues 229–251 (YRCR…SKSH), 257–279 (HKCP…IRIH), 285–307 (YSCN…TRIH), 318–340 (HKCP…LRIH), 346–368 (YNCS…TRIH), 374–398 (YKCA…RRQH), 404–426 (FKCH…LSTH), and 434–456 (YTCT…MRKH). The span at 500-513 (QAQASQASQQQQQQ) shows a compositional bias: low complexity. Residues 500-553 (QAQASQASQQQQQQQPPPPQPPHFQSPGAAPQGGGGGDSNQNPPPQCSFDLTPY) are disordered. Positions 514–523 (QPPPPQPPHF) are enriched in pro residues.

This sequence belongs to the krueppel C2H2-type zinc-finger protein family. As to quaternary structure, interacts with BCAR1. As to expression, expressed in osteocytes, osteoblasts, and chondrocytes in bone.

The protein localises to the nucleus. Functionally, transcription factor that binds the consensus DNA sequence [GC]AAAAA. Seems to bind and regulate the promoters of MMP1, MMP3, MMP7 and COL1A1. This Rattus norvegicus (Rat) protein is Zinc finger protein 384 (Znf384).